A 932-amino-acid chain; its full sequence is Ribosome biogenesis protein ERB1 (932 aa).

Low complexity predominate over residues 1-18 (MVRPSSSSSASASAARSG). The tract at residues 1 to 229 (MVRPSSSSSA…RSQAAQAFDL (229 aa)) is disordered. Positions 27–36 (PTATNPTTRA) are enriched in polar residues. Composition is skewed to acidic residues over residues 57–119 (VSDD…EVDS) and 150–172 (DNSDFDDDADEGDLAYDSADEDE). The span at 175-184 (SAFAARSDAS) shows a compositional bias: low complexity. 2 WD repeats span residues 555–594 (PDGGRVRCLSVDPTGNWLVTGGDDGRARLWDVAIGRCTAS) and 604–644 (AERS…NYAK). The segment at 679–698 (SMPSKPDARSPVAWTRPSEA) is disordered. 4 WD repeats span residues 762-800 (SKGSSIQKLVFHPTKPWIFVATQRYIRIYDLMAQSLIKT), 803-842 (SGFKWISTLDVHPSGDHLMVGSYDKKLAWFDLDLSARPYK), 846-885 (YHARAIRSVHFSTSWNLVADASDDGTLQLFYAKVGADYGE), and 901-932 (KNGLGVLDVKWHPNQPWLFSAGADGNALLWTT).

It belongs to the WD repeat BOP1/ERB1 family. In terms of assembly, component of the NOP7 complex, composed of ERB1, NOP7 and YTM1. The complex is held together by ERB1, which interacts with NOP7 via its N-terminal domain and with YTM1 via a high-affinity interaction between the seven-bladed beta-propeller domains of the 2 proteins. The NOP7 complex associates with the 66S pre-ribosome.

It localises to the nucleus. It is found in the nucleolus. The protein resides in the nucleoplasm. In terms of biological role, component of the NOP7 complex, which is required for maturation of the 25S and 5.8S ribosomal RNAs and formation of the 60S ribosome. This Mycosarcoma maydis (Corn smut fungus) protein is Ribosome biogenesis protein ERB1.